The chain runs to 242 residues: Small ribosomal subunit protein uS2 (242 aa).

Belongs to the universal ribosomal protein uS2 family.

This is Small ribosomal subunit protein uS2 from Aeromonas salmonicida (strain A449).